Reading from the N-terminus, the 315-residue chain is Putative S-adenosyl-L-methionine-dependent methyltransferase MAV_4557 (315 aa).

S-adenosyl-L-methionine is bound by residues D134 and 163 to 164 (DL).

It belongs to the UPF0677 family.

Its function is as follows. Exhibits S-adenosyl-L-methionine-dependent methyltransferase activity. The chain is Putative S-adenosyl-L-methionine-dependent methyltransferase MAV_4557 from Mycobacterium avium (strain 104).